The chain runs to 570 residues: MNGKFDKYEYLQDLMRRRGFAWGSFEIYGGSRGFYDYGPLGATIKRKIERKIREAFIREGFFEIETPDITPEQVFIASGHVEKFVDPVVECKKCGMRFRADHLIEEFLGIDVEGKSAEEMSRIIREHGLKCPECGGELSDVFYFNLMFETYIGPYKDKKAYLRPETAQGIFVNFKRLNAFARNKLPFGVFQIGKAYRNEISPRQGMIRLREFTQAEAEIFFNPNETEHPHFNEVKHEKLKLYPIENQLKELGEVEVTAEEAVKRGYVMNSFFAYYMVMIKKILLDIGIPEDKIRFRQQLPEERAHYSADTWDAEVYSERFGWVECVGLAYRTDYDLSRHMKMSGADLTVMIHYDKPKVVKRIQVSLNMKKVGPKLKADAKKINEIIKSMDQKELEKLVKDLNEKGKVTIEGYELSKEDFIVKEVEEKITGEKIVPHVLEPSFGIDRPFYLLLENSLTVDEDGRIYLKIKKDMAPIEVAVLPLVAKEPLTTIAYEIYRTLQKEGFIVVYDEKDSIGKRYMRYDEIGTPYCVTVDNQTPEDGTVTIRDRDTREQIRVKIEELPRKLKELIFG.

Residues Arg-99 and Glu-165 each contribute to the substrate site. ATP contacts are provided by residues 197 to 199, 207 to 212, 324 to 325, and 443 to 446; these read RNE, IRLREF, EC, and GIDR. Residue 212 to 216 coordinates substrate; it reads FTQAE. Residue 439 to 443 coordinates substrate; sequence EPSFG.

Belongs to the class-II aminoacyl-tRNA synthetase family.

It localises to the cytoplasm. The enzyme catalyses tRNA(Gly) + glycine + ATP = glycyl-tRNA(Gly) + AMP + diphosphate. Functionally, catalyzes the attachment of glycine to tRNA(Gly). The polypeptide is Glycine--tRNA ligase (Pyrococcus horikoshii (strain ATCC 700860 / DSM 12428 / JCM 9974 / NBRC 100139 / OT-3)).